Consider the following 739-residue polypeptide: UPF0313 protein YgiQ (739 aa).

In terms of domain architecture, Radical SAM core spans 372-650; it reads AYEMIRFSVN…KALLRYHDPA (279 aa). [4Fe-4S] cluster contacts are provided by Cys386, Cys390, and Cys393. A disordered region spans residues 685-739; the sequence is REARRQNRNTRPALTKHTPMATQRQTPATAKKASSTQSRPVNAGAKKRPKAAVGR. The segment covering 704–724 has biased composition (polar residues); the sequence is MATQRQTPATAKKASSTQSRP. Positions 729-739 are enriched in basic residues; it reads AKKRPKAAVGR.

Belongs to the UPF0313 family. It depends on [4Fe-4S] cluster as a cofactor.

The sequence is that of UPF0313 protein YgiQ (ygiQ) from Escherichia coli (strain K12).